A 195-amino-acid chain; its full sequence is Thymidylate kinase (195 aa).

7–14 lines the ATP pocket; it reads GIDGSGKT.

Belongs to the thymidylate kinase family.

The enzyme catalyses dTMP + ATP = dTDP + ADP. In terms of biological role, phosphorylation of dTMP to form dTDP in both de novo and salvage pathways of dTTP synthesis. This Aquifex aeolicus (strain VF5) protein is Thymidylate kinase (tmk).